The primary structure comprises 174 residues: Regenerating islet-derived protein 3-gamma (174 aa).

The signal sequence occupies residues 1–26 (MLPRVALTTMSWMLLSSLMLLSQVQG). Positions 27–37 (EDAKEDVPTSR) are excised as a propeptide. Cystine bridges form between cysteine 40–cysteine 51, cysteine 68–cysteine 170, and cysteine 145–cysteine 162. In terms of domain architecture, C-type lectin spans 47-171 (YGSYCYALFS…CISELPYVCK (125 aa)). Residues 103 to 118 (WIGLHDPTLGQEPNRG) are sufficient to activate EXTL3. Position 107 (histidine 107) interacts with Zn(2+). The short motif at 114–116 (EPN) is the EPN element. Residues glutamate 121 and histidine 144 each coordinate Zn(2+).

In terms of assembly, forms a hexameric membrane-permeabilizing oligomeric pore on membrane phospholipids. The hexamer is formed by three dimers related by helical symmetry. Forms filaments, filamentation traps pore complexes and limits damage to host cells. Interacts with EXTL3. Post-translationally, proteolytic processing by trypsin removes an inhibitory N-terminal propeptide and is essential for peptidoglycan binding and antibacterial activity. Expressed in injured skeletal muscles and sciatic nerve (at protein level). Expressed in the pancreas. Expression increases during the acute phase of pancreatitis.

It localises to the secreted. The protein resides in the cytoplasm. Its activity is regulated as follows. Lipopolysaccharide inhibits pore-forming activity, explaining why is bactericidal for Gram-positive but not Gram-negative bacteria. In terms of biological role, bactericidal C-type lectin which acts exclusively against Gram-positive bacteria and mediates bacterial killing by binding to surface-exposed carbohydrate moieties of peptidoglycan. Restricts bacterial colonization of the intestinal epithelial surface and consequently limits activation of adaptive immune responses by the microbiota. Functionally, acts as a hormone in response to different stimuli like anti-inflammatory signals, such as IL17A, or gut microbiome. Is secreted by different cell types to activate its receptor EXTL3 and induce cell specific signaling pathways. Induced by IL17A in keratinocytes, regulates keratinocyte proliferation and differentiation after skin injury. In parallel, inhibits skin inflammation through the inhibition of inflammatory cytokines such as IL6 and TNF. Induced by IL22 in lung epithelial cells, inhibits cytokine production and regulates allergic airway inflammation. Induced in small intestine by inulin-enriched diet and Lactobacillus gasseri enriched microbiome, plays a role in the improvement of gut barrier function, the regulation of energy balance and glucose levels. Modulates microbiota composition in duodenal contents. Produced by nociceptor in response to endotoxins, prevents endotoxic death by targeting kynurenine pathway in microglia. Its function is as follows. Has bacteriostatic activity. Has bactericidal activity against L.monocytogenes and methicillin-resistant S.aureus. This chain is Regenerating islet-derived protein 3-gamma, found in Rattus norvegicus (Rat).